Consider the following 511-residue polypeptide: Gap junction alpha-3 protein (511 aa).

Residues 2–15 (GDWSFLGRLLENAQ) lie within the membrane without spanning it. At 16–19 (EHST) the chain is on the cytoplasmic side. Residues 20-40 (VIGKVWLTVLFIFRILVLGAA) traverse the membrane as a helical segment. The Extracellular portion of the chain corresponds to 41-71 (AEEVWGDEQSDFTCNTQQPGCENVCYDKAFP). 3 disulfides stabilise this stretch: C54/C214, C61/C208, and C65/C203. The chain crosses the membrane as a helical span at residues 72–92 (ISHIRFWVLQIIFVSTPTLIY). The Cytoplasmic segment spans residues 93-174 (LGHVLHIVRM…GALLRTYIFN (82 aa)). Residues 110–119 (EEELKKRGSV) are compositionally biased toward basic and acidic residues. The interval 110-143 (EEELKKRGSVKDNNYPGAATSGGGSGGGNNFKDP) is disordered. The segment covering 129-138 (TSGGGSGGGN) has biased composition (gly residues). The chain crosses the membrane as a helical span at residues 175-195 (IIFKTLFEVGFIVGQYFLYGF). Topologically, residues 196–223 (ELKPVYQCSRPPCPHTVDCFISRPTEKT) are extracellular. The chain crosses the membrane as a helical span at residues 224–244 (IFIIFMLVVASVSLLLNMLEI). The Cytoplasmic portion of the chain corresponds to 245–511 (YHLGWKKLKQ…SRARSDDLAV (267 aa)). The tract at residues 397 to 511 (AEQQGKAPSS…SRARSDDLAV (115 aa)) is disordered. Composition is skewed to low complexity over residues 403–415 (APSSSAGSSTPSS) and 440–456 (TTTNSGSSTSLSGASGS).

This sequence belongs to the connexin family. A hemichannel or connexon is composed of a hexamer of connexins. A functional gap junction is formed by the apposition of two hemichannels. During early stages of lens development, interacts with the C-terminus of MIP. Detected in eye lens.

The protein localises to the cell membrane. Its subcellular location is the cell junction. It localises to the gap junction. In terms of biological role, structural component of lens fiber gap junctions. Gap junctions are dodecameric channels that connect the cytoplasm of adjoining cells. They are formed by the docking of two hexameric hemichannels, one from each cell membrane. Small molecules and ions diffuse from one cell to a neighboring cell via the central pore. This Gallus gallus (Chicken) protein is Gap junction alpha-3 protein (GJA3).